A 94-amino-acid chain; its full sequence is DNA-directed RNA polymerase subunit Rpo11 (94 aa).

It belongs to the archaeal Rpo11/eukaryotic RPB11/RPC19 RNA polymerase subunit family. Part of the RNA polymerase complex.

The protein resides in the cytoplasm. It catalyses the reaction RNA(n) + a ribonucleoside 5'-triphosphate = RNA(n+1) + diphosphate. Functionally, DNA-dependent RNA polymerase (RNAP) catalyzes the transcription of DNA into RNA using the four ribonucleoside triphosphates as substrates. This chain is DNA-directed RNA polymerase subunit Rpo11, found in Thermococcus kodakarensis (strain ATCC BAA-918 / JCM 12380 / KOD1) (Pyrococcus kodakaraensis (strain KOD1)).